The sequence spans 139 residues: Metallothiol transferase FosB (139 aa).

A VOC domain is found at 4–119 (GINHITYSVS…DGHKLELHTG (116 aa)). 3 residues coordinate Mg(2+): histidine 7, histidine 66, and glutamate 115. Glutamate 115 (proton donor/acceptor) is an active-site residue.

This sequence belongs to the fosfomycin resistance protein family. FosB subfamily. Homodimer. It depends on Mg(2+) as a cofactor.

It is found in the cytoplasm. Functionally, metallothiol transferase which confers resistance to fosfomycin by catalyzing the addition of a thiol cofactor to fosfomycin. L-cysteine is probably the physiological thiol donor. The protein is Metallothiol transferase FosB of Staphylococcus haemolyticus.